Here is a 288-residue protein sequence, read N- to C-terminus: Protoheme IX farnesyltransferase 2 (288 aa).

9 helical membrane-spanning segments follow: residues 8 to 28 (ITKP…FFLA), 36 to 56 (LMLF…GCVV), 85 to 105 (VAFV…FQLV), 108 to 128 (LSAV…TMWY), 131 to 151 (NSVY…LVGY), 152 to 172 (LAVT…FCLW), 211 to 231 (AYVV…EAGY), 233 to 252 (YLAV…FRSI), and 267 to 287 (VSLL…IPLA).

This sequence belongs to the UbiA prenyltransferase family. Protoheme IX farnesyltransferase subfamily.

It is found in the cell inner membrane. The enzyme catalyses heme b + (2E,6E)-farnesyl diphosphate + H2O = Fe(II)-heme o + diphosphate. Its pathway is porphyrin-containing compound metabolism; heme O biosynthesis; heme O from protoheme: step 1/1. In terms of biological role, converts heme B (protoheme IX) to heme O by substitution of the vinyl group on carbon 2 of heme B porphyrin ring with a hydroxyethyl farnesyl side group. The chain is Protoheme IX farnesyltransferase 2 from Vibrio parahaemolyticus serotype O3:K6 (strain RIMD 2210633).